Consider the following 498-residue polypeptide: ATP synthase subunit beta, chloroplastic (498 aa).

172-179 (GGAGVGKT) serves as a coordination point for ATP.

The protein belongs to the ATPase alpha/beta chains family. As to quaternary structure, F-type ATPases have 2 components, CF(1) - the catalytic core - and CF(0) - the membrane proton channel. CF(1) has five subunits: alpha(3), beta(3), gamma(1), delta(1), epsilon(1). CF(0) has four main subunits: a(1), b(1), b'(1) and c(9-12).

It localises to the plastid. It is found in the chloroplast thylakoid membrane. It carries out the reaction ATP + H2O + 4 H(+)(in) = ADP + phosphate + 5 H(+)(out). In terms of biological role, produces ATP from ADP in the presence of a proton gradient across the membrane. The catalytic sites are hosted primarily by the beta subunits. The chain is ATP synthase subunit beta, chloroplastic from Morus indica (Mulberry).